The sequence spans 107 residues: Integration host factor subunit beta (107 aa).

The interval 54–107 (NRRPARVGRNPKSGEKVQVPEKHVPHFKPGKELRERVDGRAGEPLKNDEPEDGQ) is disordered. The span at 65–101 (KSGEKVQVPEKHVPHFKPGKELRERVDGRAGEPLKND) shows a compositional bias: basic and acidic residues.

This sequence belongs to the bacterial histone-like protein family. In terms of assembly, heterodimer of an alpha and a beta chain.

This protein is one of the two subunits of integration host factor, a specific DNA-binding protein that functions in genetic recombination as well as in transcriptional and translational control. This is Integration host factor subunit beta from Burkholderia thailandensis (strain ATCC 700388 / DSM 13276 / CCUG 48851 / CIP 106301 / E264).